We begin with the raw amino-acid sequence, 191 residues long: Holliday junction branch migration complex subunit RuvA (191 aa).

Residues Met1 to Gly64 are domain I. Residues Thr65 to Gly137 form a domain II region. The flexible linker stretch occupies residues Gly137–Ala141. A domain III region spans residues Val142–Ala191.

Belongs to the RuvA family. As to quaternary structure, homotetramer. Forms an RuvA(8)-RuvB(12)-Holliday junction (HJ) complex. HJ DNA is sandwiched between 2 RuvA tetramers; dsDNA enters through RuvA and exits via RuvB. An RuvB hexamer assembles on each DNA strand where it exits the tetramer. Each RuvB hexamer is contacted by two RuvA subunits (via domain III) on 2 adjacent RuvB subunits; this complex drives branch migration. In the full resolvosome a probable DNA-RuvA(4)-RuvB(12)-RuvC(2) complex forms which resolves the HJ.

It localises to the cytoplasm. Its function is as follows. The RuvA-RuvB-RuvC complex processes Holliday junction (HJ) DNA during genetic recombination and DNA repair, while the RuvA-RuvB complex plays an important role in the rescue of blocked DNA replication forks via replication fork reversal (RFR). RuvA specifically binds to HJ cruciform DNA, conferring on it an open structure. The RuvB hexamer acts as an ATP-dependent pump, pulling dsDNA into and through the RuvAB complex. HJ branch migration allows RuvC to scan DNA until it finds its consensus sequence, where it cleaves and resolves the cruciform DNA. In Janthinobacterium sp. (strain Marseille) (Minibacterium massiliensis), this protein is Holliday junction branch migration complex subunit RuvA.